Reading from the N-terminus, the 622-residue chain is Glutamyl-tRNA(Gln) amidotransferase subunit E (622 aa).

The protein belongs to the GatB/GatE family. GatE subfamily. Heterodimer of GatD and GatE.

It catalyses the reaction L-glutamyl-tRNA(Gln) + L-glutamine + ATP + H2O = L-glutaminyl-tRNA(Gln) + L-glutamate + ADP + phosphate + H(+). Allows the formation of correctly charged Gln-tRNA(Gln) through the transamidation of misacylated Glu-tRNA(Gln) in organisms which lack glutaminyl-tRNA synthetase. The reaction takes place in the presence of glutamine and ATP through an activated gamma-phospho-Glu-tRNA(Gln). The GatDE system is specific for glutamate and does not act on aspartate. The chain is Glutamyl-tRNA(Gln) amidotransferase subunit E from Halobacterium salinarum (strain ATCC 29341 / DSM 671 / R1).